A 690-amino-acid polypeptide reads, in one-letter code: MKKVIINTWHSFVNIPNVVGPDVEKEITRMENGACSSFSGDDDDSASMFEESETENPHARDSFRSNTHGSGQPSQREQYLPGAIALFNVNNSSNKEQEPKEKKKKKKEKKSKPDDKNENKKDPEKKKKKEKDKDKKKKEEKGKDKKEEEKKEVVVIDPSGNTYYNWLFCITLPVMYNWTMIIARACFDELQSDYLEYWLAFDYLSDVVYLLDMFVRTRTGYLEQGLLVKEERKLIDKYKSTFQFKLDVLSVIPTDLLYIKFGWNYPEIRLNRLLRISRMFEFFQRTETRTNYPNIFRISNLVMYIIIIIHWNACVYFSISKAIGFGNDTWVYPDVNDPDFGRLARKYVYSLYWSTLTLTTIGETPPPVRDSEYFFVVADFLIGVLIFATIVGNIGSMISNMNAARAEFQARIDAIKQYMHFRNVSKDMEKRVIKWFDYLWTNKKTVDEREVLKYLPDKLRAEIAINVHLDTLKKVRIFADCEAGLLVELVLKLQPQVYSPGDYICKKGDIGREMYIIKEGKLAVVADDGITQFVVLSDGSYFGEISILNIKGSKAGNRRTANIKSIGYSDLFCLSKDDLMEALTEYPDAKGMLEEKGKQILMKDGLLDINIANAGSDPKDLEEKVTRMESSVDLLQTRFARILAEYESMQQKLKQRLTKVEKFLKPLIDTEFSAIEGSGTESGPTDSTQD.

Residues 1 to 163 (MKKVIINTWH…VVIDPSGNTY (163 aa)) lie on the Cytoplasmic side of the membrane. 2 disordered regions span residues 33–76 (GACS…PSQR) and 88–151 (NVNN…EEKK). Positions 40-54 (GDDDDSASMFEESET) are enriched in acidic residues. The segment covering 64–76 (RSNTHGSGQPSQR) has biased composition (polar residues). Basic and acidic residues predominate over residues 111 to 151 (SKPDDKNENKKDPEKKKKKEKDKDKKKKEEKGKDKKEEEKK). A helical transmembrane segment spans residues 164–185 (YNWLFCITLPVMYNWTMIIARA). Residues 186–195 (CFDELQSDYL) are Extracellular-facing. Residues 196–215 (EYWLAFDYLSDVVYLLDMFV) traverse the membrane as a helical segment. Residues 216–241 (RTRTGYLEQGLLVKEERKLIDKYKST) lie on the Cytoplasmic side of the membrane. The chain crosses the membrane as a helical span at residues 242–251 (FQFKLDVLSV). Topologically, residues 252-264 (IPTDLLYIKFGWN) are extracellular. A helical transmembrane segment spans residues 265–283 (YPEIRLNRLLRISRMFEFF). The Cytoplasmic segment spans residues 284 to 291 (QRTETRTN). Residues 292–315 (YPNIFRISNLVMYIIIIIHWNACV) form a helical membrane-spanning segment. The tract at residues 293-402 (PNIFRISNLV…NIGSMISNMN (110 aa)) is ion conduction pathway. At 316 to 342 (YFSISKAIGFGNDTWVYPDVNDPDFGR) the chain is on the extracellular side. The N-linked (GlcNAc...) asparagine glycan is linked to asparagine 327. A run of 2 helical transmembrane segments spans residues 343-373 (LARK…DSEY) and 374-399 (FFVV…SMIS). Residues 360–363 (TIGE) are selectivity filter. Residues 400–690 (NMNAARAEFQ…ESGPTDSTQD (291 aa)) lie on the Cytoplasmic side of the membrane. Residues 403–479 (AARAEFQARI…DTLKKVRIFA (77 aa)) are C-linker. The cyclic nucleotide-binding domain (CNBD) stretch occupies residues 482 to 603 (EAGLLVELVL…EEKGKQILMK (122 aa)). Positions 543, 546, 559, and 560 each coordinate 3',5'-cyclic GMP. 2 residues coordinate 3',5'-cyclic AMP: arginine 559 and threonine 560. Positions 621–664 (LEEKVTRMESSVDLLQTRFARILAEYESMQQKLKQRLTKVEKFL) form a coiled coil.

This sequence belongs to the cyclic nucleotide-gated cation channel (TC 1.A.1.5) family. CNGA1 subfamily. Forms a heterotetramer with CNGB1 in a 3:1 ratio. May also form cyclic nucleotide-activated homotetrameric channels, that are efficiently activated by saturating cGMP, but poorly activated by saturating cAMP compared to the heterotetramer with CNGB1. The channel binds Ca(2+)-bound CALM1 via CaM1 and CaM2 regions of the CNGB1 subunit; this interaction modulates the affinity of the channel for cNMPs in response to intracellular Ca(2+) levels. In terms of tissue distribution, expressed in the retina, in rod cells (at protein level).

The protein localises to the cell membrane. The catalysed reaction is Ca(2+)(in) = Ca(2+)(out). It catalyses the reaction Na(+)(in) = Na(+)(out). The enzyme catalyses K(+)(in) = K(+)(out). It carries out the reaction NH4(+)(in) = NH4(+)(out). The catalysed reaction is Rb(+)(in) = Rb(+)(out). It catalyses the reaction Li(+)(in) = Li(+)(out). The enzyme catalyses Cs(+)(in) = Cs(+)(out). In terms of biological role, pore-forming subunit of the rod cyclic nucleotide-gated channel. Mediates rod photoresponses at dim light converting transient changes in intracellular cGMP levels into electrical signals. In the dark, cGMP levels are high and keep the channel open enabling a steady inward current carried by Na(+) and Ca(2+) ions that leads to membrane depolarization and neurotransmitter release from synaptic terminals. Upon photon absorption cGMP levels decline leading to channel closure and membrane hyperpolarization that ultimately slows neurotransmitter release and signals the presence of light, the end point of the phototransduction cascade. Conducts cGMP- and cAMP-gated ion currents, with permeability for monovalent and divalent cations. The selectivity for Ca(2+) over Na(+) increases with cGMP concentrations, whereas the selectivity among monovalent ions is independent of the cGMP levels. This chain is Cyclic nucleotide-gated channel alpha-1, found in Bos taurus (Bovine).